Here is a 427-residue protein sequence, read N- to C-terminus: A-adding tRNA nucleotidyltransferase (427 aa).

49 to 52 lines the ATP pocket; that stretch reads GTVR. The Mg(2+) site is built by aspartate 62 and aspartate 64. Residues 136-137, asparagine 141, 181-190, arginine 194, and arginine 225 each bind ATP; these read RD and DPTRLLRGVR.

The protein belongs to the tRNA nucleotidyltransferase/poly(A) polymerase family. Mg(2+) serves as cofactor.

The enzyme catalyses a tRNA with a 3' CC end + ATP = a tRNA with a 3' CCA end + diphosphate. In terms of biological role, tRNA nucleotidyltransferase involved in the synthesis of the tRNA CCA terminus. Adds the terminal adenosine residue to tRNA. This is A-adding tRNA nucleotidyltransferase from Halalkalibacterium halodurans (strain ATCC BAA-125 / DSM 18197 / FERM 7344 / JCM 9153 / C-125) (Bacillus halodurans).